The primary structure comprises 178 residues: Adenine phosphoribosyltransferase (178 aa).

Belongs to the purine/pyrimidine phosphoribosyltransferase family. As to quaternary structure, homodimer.

Its subcellular location is the cytoplasm. The catalysed reaction is AMP + diphosphate = 5-phospho-alpha-D-ribose 1-diphosphate + adenine. It functions in the pathway purine metabolism; AMP biosynthesis via salvage pathway; AMP from adenine: step 1/1. In terms of biological role, catalyzes a salvage reaction resulting in the formation of AMP, that is energically less costly than de novo synthesis. The polypeptide is Adenine phosphoribosyltransferase (Helicobacter hepaticus (strain ATCC 51449 / 3B1)).